Here is a 283-residue protein sequence, read N- to C-terminus: 4-hydroxybenzoate octaprenyltransferase (283 aa).

9 consecutive transmembrane segments (helical) span residues proline 16 to glycine 36, leucine 40 to isoleucine 60, isoleucine 85 to valine 105, leucine 108 to phenylalanine 128, leucine 135 to leucine 155, tryptophan 160 to glutamate 180, phenylalanine 204 to leucine 224, leucine 226 to tyrosine 246, and phenylalanine 263 to phenylalanine 283.

This sequence belongs to the UbiA prenyltransferase family. Requires Mg(2+) as cofactor.

It is found in the cell inner membrane. The enzyme catalyses all-trans-octaprenyl diphosphate + 4-hydroxybenzoate = 4-hydroxy-3-(all-trans-octaprenyl)benzoate + diphosphate. The protein operates within cofactor biosynthesis; ubiquinone biosynthesis. Functionally, catalyzes the prenylation of para-hydroxybenzoate (PHB) with an all-trans polyprenyl group. Mediates the second step in the final reaction sequence of ubiquinone-8 (UQ-8) biosynthesis, which is the condensation of the polyisoprenoid side chain with PHB, generating the first membrane-bound Q intermediate 3-octaprenyl-4-hydroxybenzoate. This Idiomarina loihiensis (strain ATCC BAA-735 / DSM 15497 / L2-TR) protein is 4-hydroxybenzoate octaprenyltransferase.